We begin with the raw amino-acid sequence, 475 residues long: Ribulose bisphosphate carboxylase large chain (475 aa).

A propeptide spanning residues M1–S2 is cleaved from the precursor. P3 bears the N-acetylproline mark. N6,N6,N6-trimethyllysine is present on K14. Substrate contacts are provided by N123 and T173. Residue K175 is the Proton acceptor of the active site. K177 contributes to the substrate binding site. The Mg(2+) site is built by K201, D203, and E204. At K201 the chain carries N6-carboxylysine. The active-site Proton acceptor is the H294. Substrate-binding residues include R295, H327, and S379.

Belongs to the RuBisCO large chain family. Type I subfamily. As to quaternary structure, heterohexadecamer of 8 large chains and 8 small chains; disulfide-linked. The disulfide link is formed within the large subunit homodimers. Requires Mg(2+) as cofactor. The disulfide bond which can form in the large chain dimeric partners within the hexadecamer appears to be associated with oxidative stress and protein turnover.

Its subcellular location is the plastid. It is found in the chloroplast. It catalyses the reaction 2 (2R)-3-phosphoglycerate + 2 H(+) = D-ribulose 1,5-bisphosphate + CO2 + H2O. The enzyme catalyses D-ribulose 1,5-bisphosphate + O2 = 2-phosphoglycolate + (2R)-3-phosphoglycerate + 2 H(+). RuBisCO catalyzes two reactions: the carboxylation of D-ribulose 1,5-bisphosphate, the primary event in carbon dioxide fixation, as well as the oxidative fragmentation of the pentose substrate in the photorespiration process. Both reactions occur simultaneously and in competition at the same active site. This chain is Ribulose bisphosphate carboxylase large chain, found in Quercus rubra (Northern red oak).